The chain runs to 439 residues: Transmembrane protease serine 11F (439 aa).

Over 1–33 the chain is Cytoplasmic; sequence MMYAPVEFSQTAYPRIEYQRRQQQFWDPIRLAL. A helical; Signal-anchor for type II membrane protein transmembrane segment spans residues 34-54; sequence FTLAIVAIVGITIGIVTHFVV. Residues 55–439 lie on the Extracellular side of the membrane; the sequence is EDDKSFYYLA…RDWIASKTGL (385 aa). In terms of domain architecture, SEA spans 58 to 176; the sequence is KSFYYLASFQ…PSFSLTPIDS (119 aa). The 232-residue stretch at 207–438 folds into the Peptidase S1 domain; sequence IVQGRETAME…YRDWIASKTG (232 aa). Cys-234 and Cys-250 are joined by a disulfide. Active-site charge relay system residues include His-249 and Asp-294. Cystine bridges form between Cys-359-Cys-375 and Cys-386-Cys-414. Catalysis depends on Ser-390, which acts as the Charge relay system.

Belongs to the peptidase S1 family.

Its subcellular location is the membrane. Functionally, probable serine protease. The polypeptide is Transmembrane protease serine 11F (Tmprss11f) (Mus musculus (Mouse)).